Consider the following 241-residue polypeptide: Glucosamine-6-phosphate deaminase (241 aa).

Catalysis depends on Asp67, which acts as the Proton acceptor; for enolization step. The active-site For ring-opening step is Asn136. His138 (proton acceptor; for ring-opening step) is an active-site residue. Glu143 (for ring-opening step) is an active-site residue.

This sequence belongs to the glucosamine/galactosamine-6-phosphate isomerase family. NagB subfamily.

The enzyme catalyses alpha-D-glucosamine 6-phosphate + H2O = beta-D-fructose 6-phosphate + NH4(+). It functions in the pathway amino-sugar metabolism; N-acetylneuraminate degradation; D-fructose 6-phosphate from N-acetylneuraminate: step 5/5. Functionally, catalyzes the reversible isomerization-deamination of glucosamine 6-phosphate (GlcN6P) to form fructose 6-phosphate (Fru6P) and ammonium ion. The protein is Glucosamine-6-phosphate deaminase of Clostridium novyi (strain NT).